The chain runs to 259 residues: Eukaryotic translation initiation factor 3 subunit G-2 (259 aa).

In terms of domain architecture, RRM spans 179-257 (SAVRISNLSE…LILSVEWSKP (79 aa)).

This sequence belongs to the eIF-3 subunit G family. Component of the eukaryotic translation initiation factor 3 (eIF-3) complex. The eIF-3 complex interacts with pix.

Its subcellular location is the cytoplasm. Its function is as follows. RNA-binding component of the eukaryotic translation initiation factor 3 (eIF-3) complex, which is involved in protein synthesis of a specialized repertoire of mRNAs and, together with other initiation factors, stimulates binding of mRNA and methionyl-tRNAi to the 40S ribosome. The eIF-3 complex specifically targets and initiates translation of a subset of mRNAs involved in cell proliferation. This subunit can bind 18S rRNA. This Drosophila virilis (Fruit fly) protein is Eukaryotic translation initiation factor 3 subunit G-2.